Reading from the N-terminus, the 501-residue chain is Glutamyl-tRNA(Gln) amidotransferase subunit A (501 aa).

Catalysis depends on charge relay system residues Lys-84 and Ser-159. Catalysis depends on Ser-183, which acts as the Acyl-ester intermediate.

Belongs to the amidase family. GatA subfamily. In terms of assembly, heterotrimer of A, B and C subunits.

The enzyme catalyses L-glutamyl-tRNA(Gln) + L-glutamine + ATP + H2O = L-glutaminyl-tRNA(Gln) + L-glutamate + ADP + phosphate + H(+). Functionally, allows the formation of correctly charged Gln-tRNA(Gln) through the transamidation of misacylated Glu-tRNA(Gln) in organisms which lack glutaminyl-tRNA synthetase. The reaction takes place in the presence of glutamine and ATP through an activated gamma-phospho-Glu-tRNA(Gln). The polypeptide is Glutamyl-tRNA(Gln) amidotransferase subunit A (Streptomyces avermitilis (strain ATCC 31267 / DSM 46492 / JCM 5070 / NBRC 14893 / NCIMB 12804 / NRRL 8165 / MA-4680)).